Consider the following 443-residue polypeptide: Protein FAM83A (443 aa).

The interval 311 to 403 (DSGVSVMTDS…YYQRNYAPDS (93 aa)) is disordered. Residues 315 to 326 (SVMTDSTPESVN) show a composition bias toward polar residues. Composition is skewed to low complexity over residues 327-344 (TTSE…SNDS) and 388-399 (SNYQPNYYQRNY).

Belongs to the FAM83 family.

The protein localises to the cytoplasm. May function in the epidermal growth factor receptor/EGFR signaling pathway. The sequence is that of Protein FAM83A from Xenopus laevis (African clawed frog).